The chain runs to 640 residues: DNA gyrase subunit B (640 aa).

The Toprim domain occupies Ala423 to Pro537. Mg(2+)-binding residues include Glu429, Asp502, and Asp504.

This sequence belongs to the type II topoisomerase GyrB family. As to quaternary structure, heterotetramer, composed of two GyrA and two GyrB chains. In the heterotetramer, GyrA contains the active site tyrosine that forms a transient covalent intermediate with DNA, while GyrB binds cofactors and catalyzes ATP hydrolysis. Requires Mg(2+) as cofactor. The cofactor is Mn(2+). Ca(2+) serves as cofactor.

It localises to the cytoplasm. The enzyme catalyses ATP-dependent breakage, passage and rejoining of double-stranded DNA.. In terms of biological role, a type II topoisomerase that negatively supercoils closed circular double-stranded (ds) DNA in an ATP-dependent manner to modulate DNA topology and maintain chromosomes in an underwound state. Negative supercoiling favors strand separation, and DNA replication, transcription, recombination and repair, all of which involve strand separation. Also able to catalyze the interconversion of other topological isomers of dsDNA rings, including catenanes and knotted rings. Type II topoisomerases break and join 2 DNA strands simultaneously in an ATP-dependent manner. The chain is DNA gyrase subunit B from Spiroplasma citri.